Reading from the N-terminus, the 232-residue chain is Orotidine 5'-phosphate decarboxylase (232 aa).

Substrate-binding positions include aspartate 12, lysine 34, 61-70 (DMKLLDIDNT), threonine 116, arginine 177, glutamine 186, glycine 206, and arginine 207. Lysine 63 acts as the Proton donor in catalysis.

Belongs to the OMP decarboxylase family. Type 1 subfamily. Homodimer.

The catalysed reaction is orotidine 5'-phosphate + H(+) = UMP + CO2. Its pathway is pyrimidine metabolism; UMP biosynthesis via de novo pathway; UMP from orotate: step 2/2. Its function is as follows. Catalyzes the decarboxylation of orotidine 5'-monophosphate (OMP) to uridine 5'-monophosphate (UMP). The chain is Orotidine 5'-phosphate decarboxylase from Sinorhizobium medicae (strain WSM419) (Ensifer medicae).